We begin with the raw amino-acid sequence, 336 residues long: Glyoxylate reductase (336 aa).

NADP(+) is bound by residues 158-161 (FGRI), 180-182 (SRT), and 239-241 (IAR). Residues arginine 241 and glutamate 270 contribute to the active site. The active-site Proton donor is histidine 288. Position 288–290 (288–290 (HIG)) interacts with NADP(+).

The protein belongs to the D-isomer specific 2-hydroxyacid dehydrogenase family. GyaR subfamily. In terms of assembly, homodimer.

The protein resides in the cytoplasm. The enzyme catalyses glycolate + NAD(+) = glyoxylate + NADH + H(+). The sequence is that of Glyoxylate reductase from Pyrococcus furiosus (strain ATCC 43587 / DSM 3638 / JCM 8422 / Vc1).